The primary structure comprises 65 residues: Large ribosomal subunit protein bL35 (65 aa).

Disordered regions lie at residues 1–23 (MPKL…GGFK) and 36–65 (MTTK…MPYA). The span at 54–65 (DTTSLVQQMPYA) shows a compositional bias: polar residues.

It belongs to the bacterial ribosomal protein bL35 family.

The protein is Large ribosomal subunit protein bL35 of Francisella tularensis subsp. tularensis (strain FSC 198).